Here is a 448-residue protein sequence, read N- to C-terminus: Phosphoglucosamine mutase (448 aa).

Serine 104 (phosphoserine intermediate) is an active-site residue. The Mg(2+) site is built by serine 104, aspartate 243, aspartate 245, and aspartate 247. Phosphoserine is present on serine 104.

The protein belongs to the phosphohexose mutase family. It depends on Mg(2+) as a cofactor. Post-translationally, activated by phosphorylation.

It catalyses the reaction alpha-D-glucosamine 1-phosphate = D-glucosamine 6-phosphate. Catalyzes the conversion of glucosamine-6-phosphate to glucosamine-1-phosphate. In Xylella fastidiosa (strain Temecula1 / ATCC 700964), this protein is Phosphoglucosamine mutase.